We begin with the raw amino-acid sequence, 239 residues long: Large ribosomal subunit protein uL2 (239 aa).

Residues 202–239 (HGGGSHQHVGRPSTVARNTPPGRKVGHIAARRTGRRKG) are disordered. The segment covering 225–239 (KVGHIAARRTGRRKG) has biased composition (basic residues).

The protein belongs to the universal ribosomal protein uL2 family. As to quaternary structure, part of the 50S ribosomal subunit. Forms a bridge to the 30S subunit in the 70S ribosome.

In terms of biological role, one of the primary rRNA binding proteins. Required for association of the 30S and 50S subunits to form the 70S ribosome, for tRNA binding and peptide bond formation. It has been suggested to have peptidyltransferase activity; this is somewhat controversial. Makes several contacts with the 16S rRNA in the 70S ribosome. The protein is Large ribosomal subunit protein uL2 of Desulfurococcus amylolyticus (strain DSM 18924 / JCM 16383 / VKM B-2413 / 1221n) (Desulfurococcus kamchatkensis).